We begin with the raw amino-acid sequence, 342 residues long: Alternative oxidase, mitochondrial (342 aa).

Residues 1-20 (MIKTYQYRSILNSRNVGIRF) constitute a mitochondrion transit peptide. Residues 135–155 (LTRCIFLESVAGVPGMVAAFI) form a helical membrane-spanning segment. The Fe cation site is built by E142, E181, and H184. A helical transmembrane segment spans residues 200 to 220 (FIIYMGQGVFANLFFLVYLIK). Residues E232, E287, and H290 each contribute to the Fe cation site. 2 stretches are compositionally biased toward basic and acidic residues: residues 308-321 (PFAL…KEQQ) and 330-342 (PHPE…QMRL). Positions 308–342 (PFALKVEDVPKEQQPDEYSLKTPHPEGWNREQMRL) are disordered.

This sequence belongs to the alternative oxidase family. In terms of assembly, homodimer; disulfide-linked. It depends on Fe cation as a cofactor.

The protein resides in the mitochondrion inner membrane. Functionally, catalyzes cyanide-resistant oxygen consumption. May increase respiration when the cytochrome respiratory pathway is restricted, or in response to low temperatures. The chain is Alternative oxidase, mitochondrial (AOX1) from Wickerhamomyces anomalus (Yeast).